Consider the following 117-residue polypeptide: Large ribosomal subunit protein bL20 (117 aa).

It belongs to the bacterial ribosomal protein bL20 family.

Binds directly to 23S ribosomal RNA and is necessary for the in vitro assembly process of the 50S ribosomal subunit. It is not involved in the protein synthesizing functions of that subunit. The sequence is that of Large ribosomal subunit protein bL20 from Acetivibrio thermocellus (strain ATCC 27405 / DSM 1237 / JCM 9322 / NBRC 103400 / NCIMB 10682 / NRRL B-4536 / VPI 7372) (Clostridium thermocellum).